Consider the following 155-residue polypeptide: Protein Smg homolog (155 aa).

It belongs to the Smg family.

This is Protein Smg homolog from Methylococcus capsulatus (strain ATCC 33009 / NCIMB 11132 / Bath).